The sequence spans 154 residues: 20 kDa calcium-binding protein (154 aa).

EF-hand domains lie at Asp13 to Thr48, Val49 to Glu84, Gln86 to Asp121, and Leu122 to Glu154. Asp62, Asp64, Thr66, Asp99, Asn101, Glu105, Asp110, Asp135, Asp137, Ser139, and Glu146 together coordinate Ca(2+).

The protein resides in the tegument membrane. In terms of biological role, calcium-binding protein. The polypeptide is 20 kDa calcium-binding protein (SM20) (Schistosoma mansoni (Blood fluke)).